The chain runs to 185 residues: Glycerol-3-phosphate acyltransferase 4 (185 aa).

6 helical membrane-spanning segments follow: residues 1–21 (MPLLFVLLSYLLGTFPSAYLA), 47–67 (LGRGWGLAVFVFDLAKGSLAI), 69–89 (LALAAGLSPGWVMFCGLAAVL), 113–133 (LLIATQPMLIMGGLGLLVLLF), 137–157 (VIAASAVMFGLLWLAVILYGL), and 158–178 (PGGVVAYSIGLPVVVGLTHFI).

The protein belongs to the PlsY family. As to quaternary structure, probably interacts with PlsX.

The protein localises to the cell membrane. The enzyme catalyses an acyl phosphate + sn-glycerol 3-phosphate = a 1-acyl-sn-glycero-3-phosphate + phosphate. It participates in lipid metabolism; phospholipid metabolism. Its function is as follows. Catalyzes the transfer of an acyl group from acyl-phosphate (acyl-PO(4)) to glycerol-3-phosphate (G3P) to form lysophosphatidic acid (LPA). This enzyme utilizes acyl-phosphate as fatty acyl donor, but not acyl-CoA or acyl-ACP. The protein is Glycerol-3-phosphate acyltransferase 4 of Dehalococcoides mccartyi (strain ATCC BAA-2266 / KCTC 15142 / 195) (Dehalococcoides ethenogenes (strain 195)).